Here is a 418-residue protein sequence, read N- to C-terminus: Dihydrolipoyllysine-residue acetyltransferase component of pyruvate dehydrogenase complex (418 aa).

One can recognise a Lipoyl-binding domain in the interval 2 to 78; sequence PIKLLMPALS…PVNSLIAVLI (77 aa). Position 43 is an N6-lipoyllysine (Lys-43). In terms of domain architecture, Peripheral subunit-binding (PSBD) spans 133 to 170; sequence FASPLAKRLAKIQNVRIEEIKGSGPHGRIIKQDVLSHK. The active site involves His-388.

Belongs to the 2-oxoacid dehydrogenase family. Forms a 24-polypeptide structural core with octahedral symmetry. (R)-lipoate serves as cofactor.

The catalysed reaction is N(6)-[(R)-dihydrolipoyl]-L-lysyl-[protein] + acetyl-CoA = N(6)-[(R)-S(8)-acetyldihydrolipoyl]-L-lysyl-[protein] + CoA. Its function is as follows. The pyruvate dehydrogenase complex catalyzes the overall conversion of pyruvate to acetyl-CoA and CO(2). It contains multiple copies of three enzymatic components: pyruvate dehydrogenase (E1), dihydrolipoamide acetyltransferase (E2) and lipoamide dehydrogenase (E3). In Rickettsia bellii (strain RML369-C), this protein is Dihydrolipoyllysine-residue acetyltransferase component of pyruvate dehydrogenase complex (pdhC).